A 309-amino-acid polypeptide reads, in one-letter code: Serine/threonine-protein phosphatase PP2A catalytic subunit (309 aa).

Asp-57, His-59, Asp-85, and Asn-117 together coordinate Mn(2+). His-118 functions as the Proton donor in the catalytic mechanism. Residues His-167 and His-241 each coordinate Mn(2+).

It belongs to the PPP phosphatase family. PP-2A subfamily. The cofactor is Mn(2+).

The enzyme catalyses O-phospho-L-seryl-[protein] + H2O = L-seryl-[protein] + phosphate. It carries out the reaction O-phospho-L-threonyl-[protein] + H2O = L-threonyl-[protein] + phosphate. The chain is Serine/threonine-protein phosphatase PP2A catalytic subunit from Brassica napus (Rape).